Reading from the N-terminus, the 734-residue chain is Cell surface glycoprotein gp138B (734 aa).

The N-terminal stretch at 1–20 (MKIILTLSIFLICFLQLGQS) is a signal peptide. 16 N-linked (GlcNAc...) asparagine glycosylation sites follow: Asn58, Asn89, Asn124, Asn198, Asn224, Asn392, Asn420, Asn435, Asn482, Asn498, Asn523, Asn596, Asn605, Asn614, Asn621, and Asn630. The IPT/TIG domain occupies 504 to 592 (PFIKSYGFLE…SSNEVTFYYF (89 aa)). The interval 678–712 (GETPTPSTTPSTTPSTTPSTTPSSTPTQSPGDDGS) is disordered. Residues 680 to 712 (TPTPSTTPSTTPSTTPSTTPSSTPTQSPGDDGS) show a composition bias toward low complexity. 4 repeat units span residues 683–686 (PSTT), 687–690 (PSTT), 691–694 (PSTT), and 695–698 (PSTT). The tract at residues 683-698 (PSTTPSTTPSTTPSTT) is 4 X 4 AA tandem repeats of P-S-T-T. The GPI-like-anchor amidated glycine moiety is linked to residue Gly708. Positions 709-734 (DDGSTSSTLSISFYLITLLLLTQQFI) are cleaved as a propeptide — removed in mature form.

The sugar chains may play important roles in cell fusion. Post-translationally, the GPI-like-anchor contains a phosphoceramide group, rather than a phosphatidyl group.

It localises to the cell membrane. Involved in the sexual cell fusion of D.discoideum. This Dictyostelium discoideum (Social amoeba) protein is Cell surface glycoprotein gp138B (GP138B).